We begin with the raw amino-acid sequence, 310 residues long: tRNA dimethylallyltransferase (310 aa).

Position 5-12 (5-12) interacts with ATP; that stretch reads GPTASGKS. 7–12 serves as a coordination point for substrate; that stretch reads TASGKS. Residues 30–33 are interaction with substrate tRNA; it reads DSMQ.

The protein belongs to the IPP transferase family. Monomer. Mg(2+) serves as cofactor.

It carries out the reaction adenosine(37) in tRNA + dimethylallyl diphosphate = N(6)-dimethylallyladenosine(37) in tRNA + diphosphate. Catalyzes the transfer of a dimethylallyl group onto the adenine at position 37 in tRNAs that read codons beginning with uridine, leading to the formation of N6-(dimethylallyl)adenosine (i(6)A). This chain is tRNA dimethylallyltransferase, found in Rhodopseudomonas palustris (strain HaA2).